Consider the following 240-residue polypeptide: Eukaryotic translation initiation factor 3 subunit J (240 aa).

The disordered stretch occupies residues 19-95 (KADVNKWAGE…FANMTPEQQL (77 aa)). A compositionally biased stretch (acidic residues) spans 28-45 (EDEDDVKDNWEDDDEEEE). The span at 46–56 (KKDAPKQEDTP) shows a compositional bias: basic and acidic residues. A compositionally biased stretch (basic residues) spans 60-71 (AKPKKAAQQKKL). 2 coiled-coil regions span residues 63–90 (KKAA…ANMT) and 176–235 (SNNI…DYDD). The span at 72 to 81 (KKEDLERLQR) shows a compositional bias: basic and acidic residues.

This sequence belongs to the eIF-3 subunit J family. As to quaternary structure, component of the eukaryotic translation initiation factor 3 (eIF-3) complex.

It localises to the cytoplasm. In terms of biological role, component of the eukaryotic translation initiation factor 3 (eIF-3) complex, which is involved in protein synthesis of a specialized repertoire of mRNAs and, together with other initiation factors, stimulates binding of mRNA and methionyl-tRNAi to the 40S ribosome. The eIF-3 complex specifically targets and initiates translation of a subset of mRNAs involved in cell proliferation. In Anopheles gambiae (African malaria mosquito), this protein is Eukaryotic translation initiation factor 3 subunit J.